The following is a 592-amino-acid chain: E3 ubiquitin-protein ligase RNF180 (592 aa).

Topologically, residues 1 to 564 are cytoplasmic; sequence MKRSEESTST…DSRGWWFDMD (564 aa). The residue at position 231 (Ser231) is a Phosphoserine. The segment at 282-489 is interaction with ZIC2; that stretch reads QSPPSFDPNM…VFLQTELNNA (208 aa). The RING-type zinc finger occupies 432-474; it reads CAVCLDVYFNPYMCYPCHHIFCEPCLRTLAKDNPASTPCPLCR. The chain crosses the membrane as a helical span at residues 565–585; it reads MVIIYIYSVNWVIGFVVFCFL. The Extracellular segment spans residues 586–592; the sequence is CYFFFPF.

As to quaternary structure, interacts with ZIC2. Brain, kidney, testis and uterus. membrane protein. Nucleus envelope.

Its subcellular location is the endoplasmic reticulum membrane. It is found in the nucleus envelope. The enzyme catalyses S-ubiquitinyl-[E2 ubiquitin-conjugating enzyme]-L-cysteine + [acceptor protein]-L-lysine = [E2 ubiquitin-conjugating enzyme]-L-cysteine + N(6)-ubiquitinyl-[acceptor protein]-L-lysine.. It functions in the pathway protein modification; protein ubiquitination. Functionally, E3 ubiquitin-protein ligase which promotes polyubiquitination and degradation by the proteasome pathway of ZIC2. The chain is E3 ubiquitin-protein ligase RNF180 (Rnf180) from Mus musculus (Mouse).